Consider the following 575-residue polypeptide: Delta-1-pyrroline-5-carboxylate dehydrogenase, mitochondrial (575 aa).

Position 297 to 302 (297 to 302 (GKIQSG)) interacts with NAD(+). Residue Glu317 is the Proton acceptor of the active site. Catalysis depends on Cys351, which acts as the Nucleophile.

It belongs to the aldehyde dehydrogenase family.

The protein resides in the mitochondrion inner membrane. The enzyme catalyses L-glutamate 5-semialdehyde + NAD(+) + H2O = L-glutamate + NADH + 2 H(+). It participates in amino-acid degradation; L-proline degradation into L-glutamate; L-glutamate from L-proline: step 2/2. This Saccharomyces cerevisiae (strain ATCC 204508 / S288c) (Baker's yeast) protein is Delta-1-pyrroline-5-carboxylate dehydrogenase, mitochondrial (PUT2).